We begin with the raw amino-acid sequence, 32 residues long: Cytochrome b6-f complex subunit 7 (32 aa).

Residues 9–29 form a helical membrane-spanning segment; that stretch reads AILSSVLVLVGLAVGFLLLKV.

The protein belongs to the PetM family. As to quaternary structure, the 4 large subunits of the cytochrome b6-f complex are cytochrome b6, subunit IV (17 kDa polypeptide, PetD), cytochrome f and the Rieske protein, while the 4 small subunits are PetG, PetL, PetM and PetN. The complex functions as a dimer.

It is found in the plastid. The protein localises to the chloroplast thylakoid membrane. Component of the cytochrome b6-f complex, which mediates electron transfer between photosystem II (PSII) and photosystem I (PSI), cyclic electron flow around PSI, and state transitions. The polypeptide is Cytochrome b6-f complex subunit 7 (Porphyra purpurea (Red seaweed)).